Reading from the N-terminus, the 213-residue chain is Large ribosomal subunit protein uL3 (213 aa).

Belongs to the universal ribosomal protein uL3 family. Part of the 50S ribosomal subunit. Forms a cluster with proteins L14 and L19.

Functionally, one of the primary rRNA binding proteins, it binds directly near the 3'-end of the 23S rRNA, where it nucleates assembly of the 50S subunit. The sequence is that of Large ribosomal subunit protein uL3 from Bifidobacterium longum (strain DJO10A).